The chain runs to 232 residues: Ribonuclease 3 (232 aa).

Positions 5–134 (QTVLKNHFAI…FLGALLLDKD (130 aa)) constitute an RNase III domain. Glu-47 serves as a coordination point for Mg(2+). Asp-51 is an active-site residue. Mg(2+)-binding residues include Asp-120 and Glu-123. Glu-123 is a catalytic residue. The region spanning 160–229 (DYKTHLQELL…AKNAVEKGLD (70 aa)) is the DRBM domain.

The protein belongs to the ribonuclease III family. Homodimer. Mg(2+) serves as cofactor.

The protein resides in the cytoplasm. It carries out the reaction Endonucleolytic cleavage to 5'-phosphomonoester.. Functionally, digests double-stranded RNA. Involved in the processing of primary rRNA transcript to yield the immediate precursors to the large and small rRNAs (23S and 16S). Processes some mRNAs, and tRNAs when they are encoded in the rRNA operon. Processes pre-crRNA and tracrRNA of type II CRISPR loci if present in the organism. The chain is Ribonuclease 3 from Streptococcus pneumoniae (strain Taiwan19F-14).